A 782-amino-acid chain; its full sequence is Anoctamin-9 (782 aa).

Residues 1 to 198 (MQGEESLRIL…LYFVWLGWYT (198 aa)) are Cytoplasmic-facing. A helical transmembrane segment spans residues 199–219 (YMLVPAALTGLLVFLSGFSLF). Over 220–264 (EASQISKEICEAHDILMCPLGDHSRRYQRLSETCTFAKLTHLFDN) the chain is Extracellular. Phosphoserine; by PKA is present on S250. A helical transmembrane segment spans residues 265–285 (DGTVVFAIFMALWATVFLEIW). Over 286–331 (KRQRARVVLHWDLYVWDEEQEEMALQLINCPDYKLRPYQHSYLRST) the chain is Cytoplasmic. Residues 332–352 (VILVLTLLMICLMIGMAHVLV) form a helical membrane-spanning segment. Residues 353 to 373 (VYRVLASALFSSSAVPFLEEQ) are Extracellular-facing. The helical transmembrane segment at 374–394 (VTTAVVVTGALVHYVTIIIMT) threads the bilayer. Residues 395 to 423 (KINRCVALKLCDFEMPRTFSERESRFTIR) lie on the Cytoplasmic side of the membrane. A helical membrane pass occupies residues 424–444 (FFTLQFFTHFSSLIYIAFILG). Residues 445-552 (RINGHPGKST…EMMIQYGFTT (108 aa)) are Extracellular-facing. A helical transmembrane segment spans residues 553–573 (IFVAAFPLAPLLALFSNLVEI). At 574–604 (RLDAIKMVWLQRRLVPRKAKDIGTWLQVLET) the chain is on the cytoplasmic side. Residues 605 to 625 (IGVLAVIANGMVIAFTSEFIP) traverse the membrane as a helical segment. Topologically, residues 626–703 (RVVYKYRYSP…QFWFLLAIRL (78 aa)) are extracellular. N-linked (GlcNAc...) asparagine glycans are attached at residues N641, N652, N674, and N690. A helical membrane pass occupies residues 704–724 (AFVILFEHVALCIKLIAAWFV). Topologically, residues 725–782 (PDIPQSVKNKVLEVKYQRLREKMWHGRQRLGGVGAGSRPPMPAHPTPASIFSARSTDV) are cytoplasmic. Residues 756–782 (GVGAGSRPPMPAHPTPASIFSARSTDV) are disordered.

This sequence belongs to the anoctamin family. Post-translationally, phosphorylated on serine residues by cAMP-dependent protein kinase A (PKA) which is essential for activation of its cation channel activity. In terms of tissue distribution, expressed in the kidney. Expressed in the olfactory epithelium.

Its subcellular location is the cell membrane. It localises to the endoplasmic reticulum. The enzyme catalyses a 1,2-diacyl-sn-glycero-3-phospho-L-serine(in) = a 1,2-diacyl-sn-glycero-3-phospho-L-serine(out). It carries out the reaction a beta-D-galactosyl-(1&lt;-&gt;1')-N-acylsphing-4-enine(out) = a beta-D-galactosyl-(1&lt;-&gt;1')-N-acylsphing-4-enine(in). It catalyses the reaction a 1,2-diacyl-sn-glycero-3-phosphocholine(in) = a 1,2-diacyl-sn-glycero-3-phosphocholine(out). The catalysed reaction is Ca(2+)(in) = Ca(2+)(out). The enzyme catalyses Na(+)(in) = Na(+)(out). It carries out the reaction K(+)(in) = K(+)(out). Cation channel activity is activated via phosphorylation on serine residues by cAMP-dependent protein kinase A (PKA). Its function is as follows. PKA-activated nonselective cation channel. Discriminates poorly among cations but is more permeable to Ca(2+) ions than to monovalent cations. Acts as a calcium-activated calcium permeable channel which may operate as a endoplasmic reticulum (ER) Ca(2+)-leak channel, reducing the loading of the ER Ca(2+) store. Regulates intracellular Ca2+ signals, ion channel activity, and cytokine release in the renal tissue. Plays an important role in olfaction, amplifying cAMP-evoked cyclic nucleotide-gated (CNG) channel currents in the olfactory sensory neurons. Has calcium-dependent phospholipid scramblase activity; scrambles phosphatidylserine, phosphatidylcholine and galactosylceramide. Does not exhibit calcium-activated chloride channel (CaCC) activity. Can inhibit the activity of ANO1. In Homo sapiens (Human), this protein is Anoctamin-9 (ANO9).